Consider the following 124-residue polypeptide: Putative membrane protein insertion efficiency factor (124 aa).

This sequence belongs to the UPF0161 family.

The protein localises to the cell inner membrane. In terms of biological role, could be involved in insertion of integral membrane proteins into the membrane. The protein is Putative membrane protein insertion efficiency factor of Psychrobacter arcticus (strain DSM 17307 / VKM B-2377 / 273-4).